We begin with the raw amino-acid sequence, 147 residues long: 18 kDa antigen 1 (147 aa).

The sHSP domain occupies 21–131; it reads TPTRPAVMPM…RPRKIAVGAA (111 aa).

Belongs to the small heat shock protein (HSP20) family.

In terms of biological role, not known. This protein is one of the major immune reactive proteins in mycobacteria. This chain is 18 kDa antigen 1, found in Mycobacterium avium.